Consider the following 282-residue polypeptide: Phenylethanolamine N-methyltransferase (282 aa).

The residue at position 7 (serine 7) is a Phosphoserine. S-adenosyl-L-methionine-binding positions include tyrosine 35, tyrosine 40, 79–80 (GS), tyrosine 85, aspartate 101, asparagine 106, 158–159 (DV), and alanine 181. The octopamine site is built by glutamate 219 and aspartate 267.

It catalyses the reaction phenylethanolamine + S-adenosyl-L-methionine = N-methylphenylethanolamine + S-adenosyl-L-homocysteine + H(+). It carries out the reaction (R)-noradrenaline + S-adenosyl-L-methionine = (R)-adrenaline + S-adenosyl-L-homocysteine + H(+). The catalysed reaction is (R)-normetanephrine + S-adenosyl-L-methionine = (R)-metanephrine + S-adenosyl-L-homocysteine + H(+). The enzyme catalyses (R)-octopamine + S-adenosyl-L-methionine = (R)-synephrine + S-adenosyl-L-homocysteine + H(+). It functions in the pathway catecholamine biosynthesis; (R)-adrenaline biosynthesis; (R)-adrenaline from (R)-noradrenaline: step 1/1. With respect to regulation, inhibited by methyl methanethiosulfonate, phenylglyoxal, tetranitromethane and diethyl pyrocarbonate. Inhibited by 4-oxo-1,4-dihydro-quinoline-3,7-dicarboxylic acid, 4-(benzo[d][1,3]dioxol-5-ylamino)-4-oxobutanoic acid and 1,4-diaminonaphthalene-2,6-disulfonic acid. Its function is as follows. Catalyzes the transmethylation of nonepinephrine (noradrenaline) to form epinephrine (adrenaline), using S-adenosyl-L-methionine as the methyl donor. Other substrates include phenylethanolamine and octopamine. Also methylates normetanephrine. The polypeptide is Phenylethanolamine N-methyltransferase (PNMT) (Homo sapiens (Human)).